A 192-amino-acid chain; its full sequence is Ion-translocating oxidoreductase complex subunit B (192 aa).

A hydrophobic region spans residues 1-26; sequence MSTIWIAIAALSALALAFGLVLGYAS. A 4Fe-4S domain is found at 32–91; the sequence is ENDPIVEEVEAMLPQSQCGQCGYPGCRPYAEAVALNGENINKCGPGGEAMMLKLAEKLNV. [4Fe-4S] cluster is bound by residues C49, C52, C57, C74, C117, C120, C123, C127, C147, C150, C153, and C157. 4Fe-4S ferredoxin-type domains lie at 108-137 and 138-167; these read QVAW…GSTK and AVHT…LRPI.

This sequence belongs to the 4Fe4S bacterial-type ferredoxin family. RnfB subfamily. The complex is composed of six subunits: RnfA, RnfB, RnfC, RnfD, RnfE and RnfG. Requires [4Fe-4S] cluster as cofactor.

Its subcellular location is the cell inner membrane. Its function is as follows. Part of a membrane-bound complex that couples electron transfer with translocation of ions across the membrane. The sequence is that of Ion-translocating oxidoreductase complex subunit B from Pectobacterium carotovorum subsp. carotovorum (strain PC1).